The primary structure comprises 366 residues: Transaldolase (366 aa).

K140 functions as the Schiff-base intermediate with substrate in the catalytic mechanism.

This sequence belongs to the transaldolase family. Type 2 subfamily.

It is found in the cytoplasm. The enzyme catalyses D-sedoheptulose 7-phosphate + D-glyceraldehyde 3-phosphate = D-erythrose 4-phosphate + beta-D-fructose 6-phosphate. It participates in carbohydrate degradation; pentose phosphate pathway; D-glyceraldehyde 3-phosphate and beta-D-fructose 6-phosphate from D-ribose 5-phosphate and D-xylulose 5-phosphate (non-oxidative stage): step 2/3. In terms of biological role, transaldolase is important for the balance of metabolites in the pentose-phosphate pathway. The sequence is that of Transaldolase from Saccharopolyspora erythraea (strain ATCC 11635 / DSM 40517 / JCM 4748 / NBRC 13426 / NCIMB 8594 / NRRL 2338).